Here is a 243-residue protein sequence, read N- to C-terminus: Terpene cyclase penB (243 aa).

3 helical membrane passes run 19-39, 48-68, and 78-98; these read IANI…VGMI, YGMA…YSLI, and GVFI…IKFA. The N-linked (GlcNAc...) asparagine glycan is linked to asparagine 111. A run of 4 helical transmembrane segments spans residues 112–132, 137–157, 172–194, and 205–225; these read LSLI…ALAA, SLAY…GGLC, LWLS…WMYW, and LVLW…LCYW.

Belongs to the paxB family.

The protein resides in the membrane. It participates in secondary metabolite biosynthesis. Terpene cyclase; part of the gene cluster that mediates the biosynthesis of the indole diterpenes penitrems. The geranylgeranyl diphosphate (GGPP) synthase penG catalyzes the first step in penitrem biosynthesis via conversion of farnesyl pyrophosphate and isopentyl pyrophosphate into geranylgeranyl pyrophosphate (GGPP). Condensation of indole-3-glycerol phosphate with GGPP by the prenyl transferase penC then forms 3-geranylgeranylindole (3-GGI). Epoxidation by the FAD-dependent monooxygenase penM leads to a epoxidized-GGI that is substrate of the terpene cyclase penB for cyclization to yield paspaline. Paspaline is subsequently converted to 13-desoxypaxilline by the cytochrome P450 monooxygenase penP, the latter being then converted to paxilline by the cytochrome P450 monooxygenase penQ. Paxilline is converted to beta-paxitriol via C-10 ketoreduction by the short-chain dehydrogenase PC-15 which can be monoprenylated at the C-20 by the indole diterpene prenyltransferase penD. A two-step elimination (acetylation and elimination) process performed by the O-acetyltransferase PC-16 and the P.simplicissimum ptmI-ortholog not yet identified in P.crustosum, leads to the production of the prenylated form of penijanthine. The FAD-linked oxidoreductase ptmO then converts the prenylated form of penijanthine into PC-M5 which is in turn transformed into PC-M4 by the aromatic dimethylallyltransferase PC-22. A series of oxidation steps involving 4 cytochrome P450 monooxygenases (PC-21, PC-05, PC-23, PC-20) and a FAD-dependent monooxygenase (PC-14) are required for the transformation of PC-M4 to penitrems A and E. Synthesis of these final products is proposed to proceed via penitrems D and C (PC-21, PC-05, PC-14) and penitrems B and F (PC-21, PC-05, PC-14, PC-23). The polypeptide is Terpene cyclase penB (penB) (Penicillium crustosum (Blue mold fungus)).